The chain runs to 722 residues: Ribosomal RNA large subunit methyltransferase K/L (722 aa).

Residues 43 to 154 form the THUMP domain; the sequence is IGLRACLWSR…GNEGRVGIDL (112 aa).

It belongs to the methyltransferase superfamily. RlmKL family.

Its subcellular location is the cytoplasm. It carries out the reaction guanosine(2445) in 23S rRNA + S-adenosyl-L-methionine = N(2)-methylguanosine(2445) in 23S rRNA + S-adenosyl-L-homocysteine + H(+). The catalysed reaction is guanosine(2069) in 23S rRNA + S-adenosyl-L-methionine = N(2)-methylguanosine(2069) in 23S rRNA + S-adenosyl-L-homocysteine + H(+). In terms of biological role, specifically methylates the guanine in position 2445 (m2G2445) and the guanine in position 2069 (m7G2069) of 23S rRNA. This chain is Ribosomal RNA large subunit methyltransferase K/L, found in Magnetococcus marinus (strain ATCC BAA-1437 / JCM 17883 / MC-1).